The following is a 260-amino-acid chain: Small ribosomal subunit protein uS2 (260 aa).

The protein belongs to the universal ribosomal protein uS2 family.

The sequence is that of Small ribosomal subunit protein uS2 from Roseobacter denitrificans (strain ATCC 33942 / OCh 114) (Erythrobacter sp. (strain OCh 114)).